We begin with the raw amino-acid sequence, 257 residues long: Imidazole glycerol phosphate synthase subunit HisF (257 aa).

Active-site residues include Asp-11 and Asp-130.

The protein belongs to the HisA/HisF family. Heterodimer of HisH and HisF.

The protein localises to the cytoplasm. The enzyme catalyses 5-[(5-phospho-1-deoxy-D-ribulos-1-ylimino)methylamino]-1-(5-phospho-beta-D-ribosyl)imidazole-4-carboxamide + L-glutamine = D-erythro-1-(imidazol-4-yl)glycerol 3-phosphate + 5-amino-1-(5-phospho-beta-D-ribosyl)imidazole-4-carboxamide + L-glutamate + H(+). Its pathway is amino-acid biosynthesis; L-histidine biosynthesis; L-histidine from 5-phospho-alpha-D-ribose 1-diphosphate: step 5/9. Its function is as follows. IGPS catalyzes the conversion of PRFAR and glutamine to IGP, AICAR and glutamate. The HisF subunit catalyzes the cyclization activity that produces IGP and AICAR from PRFAR using the ammonia provided by the HisH subunit. This is Imidazole glycerol phosphate synthase subunit HisF from Vibrio campbellii (strain ATCC BAA-1116).